The following is an 89-amino-acid chain: Neuropeptide F (89 aa).

The signal sequence occupies residues 1–29; that stretch reads MASGTFTQRLLVALMIFALIADLSTLVAA. Position 61 is a phenylalanine amide (phenylalanine 61). Positions 65–89 are excised as a propeptide; that stretch reads GGYLNPAIFGQDEQEVDWQDSTFSR.

Belongs to the NPY family.

Its subcellular location is the secreted. Its function is as follows. An integral part of the sensory system that mediates food signaling, providing the neural basis for the regulation of food response; coordinates larval foraging and social behavior changes during development. May have a hormonal role in females. In Anopheles gambiae (African malaria mosquito), this protein is Neuropeptide F.